The chain runs to 89 residues: Small ribosomal subunit protein uS15 (89 aa).

It belongs to the universal ribosomal protein uS15 family. In terms of assembly, part of the 30S ribosomal subunit. Forms a bridge to the 50S subunit in the 70S ribosome, contacting the 23S rRNA.

One of the primary rRNA binding proteins, it binds directly to 16S rRNA where it helps nucleate assembly of the platform of the 30S subunit by binding and bridging several RNA helices of the 16S rRNA. Functionally, forms an intersubunit bridge (bridge B4) with the 23S rRNA of the 50S subunit in the ribosome. This is Small ribosomal subunit protein uS15 from Escherichia coli O139:H28 (strain E24377A / ETEC).